We begin with the raw amino-acid sequence, 79 residues long: Acyl carrier protein (79 aa).

In terms of domain architecture, Carrier spans 2–77; it reads SDIEARVKKI…NAIDYANTHH (76 aa). At serine 37 the chain carries O-(pantetheine 4'-phosphoryl)serine.

It belongs to the acyl carrier protein (ACP) family. In terms of processing, 4'-phosphopantetheine is transferred from CoA to a specific serine of apo-ACP by AcpS. This modification is essential for activity because fatty acids are bound in thioester linkage to the sulfhydryl of the prosthetic group.

Its subcellular location is the cytoplasm. It functions in the pathway lipid metabolism; fatty acid biosynthesis. Functionally, carrier of the growing fatty acid chain in fatty acid biosynthesis. This chain is Acyl carrier protein, found in Polaromonas naphthalenivorans (strain CJ2).